The sequence spans 340 residues: Protein S-acyltransferase 10 (340 aa).

A run of 2 helical transmembrane segments spans residues 34-54 and 66-86; these read LLLK…LFLF and PWYM…YFVT. One can recognise a DHHC domain in the interval 162 to 212; the sequence is LTCGYCHVEQPPRTKHCHDCDRCVLQFDHHCVWLGTCIGQKNHSKFWWYIC. Catalysis depends on Cys-192, which acts as the S-palmitoyl cysteine intermediate. The next 2 helical transmembrane spans lie at 207–227 and 241–261; these read FWWY…MYVD and IIIL…LLLI.

Belongs to the DHHC palmitoyltransferase family. As to expression, expressed in mature embryos, embryo sacs, cotyledons, whole seedlings, hydathodes, guard cells, sites of lateral root initiation, root tips and phloem, but not in xylem.

Its subcellular location is the vacuole membrane. The catalysed reaction is L-cysteinyl-[protein] + hexadecanoyl-CoA = S-hexadecanoyl-L-cysteinyl-[protein] + CoA. Functionally, S-acyltransferase involved in protein lipid modification. Catalyzes the palmitoylation of proteins peripheral or integral to the tonoplast. Required for the tonoplast localization of CBL2, CBL3 and CBL6, but not for the plasma membrane localization of CBL9, for the endosome localization of RABF1 or for the endomembrane localization of RABF2B. The polypeptide is Protein S-acyltransferase 10 (PAT10) (Arabidopsis thaliana (Mouse-ear cress)).